A 165-amino-acid polypeptide reads, in one-letter code: Hemolysin, heat labile (165 aa).

Cysteines 151 and 161 form a disulfide.

Belongs to the TDH hemolysin family. In terms of assembly, homodimer.

Its function is as follows. Bacterial hemolysins are exotoxins that attack blood cell membranes and cause cell rupture by mechanisms not clearly defined. The polypeptide is Hemolysin, heat labile (Grimontia hollisae (Vibrio hollisae)).